The sequence spans 772 residues: RNA exonuclease 5 (772 aa).

Residues 1 to 10 (MEPEREGTER) show a composition bias toward basic and acidic residues. The tract at residues 1-26 (MEPEREGTERHPRKVRKRRQAPNKLV) is disordered. Over residues 11–21 (HPRKVRKRRQA) the composition is skewed to basic residues. An Exonuclease domain is found at 228 to 376 (LFGLDCEMCL…EDARIILELA (149 aa)). 2 consecutive RRM domains span residues 505–579 (STVY…RPVT) and 600–679 (GSIY…RHLH).

The polypeptide is RNA exonuclease 5 (REXO5) (Macaca fascicularis (Crab-eating macaque)).